Reading from the N-terminus, the 320-residue chain is Meso-diaminopimelate D-dehydrogenase (320 aa).

Residues 11 to 14 (YGNL), 35 to 37 (SRR), 65 to 68 (CMGS), 88 to 90 (TYD), and 117 to 121 (TGWDP) contribute to the NADP(+) site. Residues Asp-90, Asp-120, Trp-144, 150-151 (QG), Thr-169, Arg-195, His-244, and Asn-270 contribute to the substrate site.

In terms of assembly, homodimer.

It carries out the reaction meso-2,6-diaminopimelate + NADP(+) + H2O = (S)-2-amino-6-oxoheptanedioate + NH4(+) + NADPH + H(+). Its pathway is amino-acid biosynthesis; L-lysine biosynthesis via DAP pathway; DL-2,6-diaminopimelate from (S)-tetrahydrodipicolinate: step 1/1. With respect to regulation, l,L-2,6-diaminopimelate and D,D-2,6-diaminopimelate competitively inhibit the oxidative deamination of meso-2,6-diaminopimelate. The enzyme is also inhibited by L-cysteine, and by p-chloromercuribenzoate, iodoacetic acid and HgCl(2) in vitro. Catalyzes the reversible NADPH-dependent reductive amination of L-2-amino-6-oxopimelate, the acyclic form of L-tetrahydrodipicolinate, to generate the meso compound, D,L-2,6-diaminopimelate. Probably plays a role in lysine biosynthesis. Exhibits a high substrate specificity for meso-2,6-diaminopimelate, since L,L-2,6-diaminopimelate, D,D-2,6-diaminopimelate, L-glutamate, L-alanine, L-leucine, L-valine, L-aspartate, L-threonine, L-homoserine, L-methionine, L-lysine, L-serine, L-phenylalanine, L-tyrosine, L-tryptophan, L-ornithine, L-histidine, L-arginine, D-glutamate, and D-alanine are not substrates for the oxidative deamination reaction. Can use NAD(+) only poorly since the activity observed in the presence of NAD(+) is about 3% of that with NADP(+). The protein is Meso-diaminopimelate D-dehydrogenase (ddh) of Corynebacterium glutamicum (strain ATCC 13032 / DSM 20300 / JCM 1318 / BCRC 11384 / CCUG 27702 / LMG 3730 / NBRC 12168 / NCIMB 10025 / NRRL B-2784 / 534).